Reading from the N-terminus, the 206-residue chain is CASP-like protein 1F1 (206 aa).

Residues 1–43 (MCFQFSILYTCYLAHFGVFPRKYLVMAGIEAKFQQNPPLGTHK) lie on the Cytoplasmic side of the membrane. The helical transmembrane segment at 44-64 (LFLGAHICLRILTVTATLTAA) threads the bilayer. Over 65 to 92 (WMMITSKQTVEVYGIQVEAKYSYSSAFK) the chain is Extracellular. Residues 93-113 (FFSYANAIACGCSVLTLFPAF) traverse the membrane as a helical segment. The Cytoplasmic portion of the chain corresponds to 114 to 124 (SLFYRGSTPMK). A helical membrane pass occupies residues 125 to 145 (FFFLFLHDLCMMSLVLAGCAA). The Extracellular portion of the chain corresponds to 146–177 (ATAIGYVGRYGNNHAGWMAICDQFDEYCNRIR). Residues 178-198 (LSLMFSYLAFVFILMLTIMSA) form a helical membrane-spanning segment. The Cytoplasmic segment spans residues 199–206 (NKSREIRV).

This sequence belongs to the Casparian strip membrane proteins (CASP) family. As to quaternary structure, homodimer and heterodimers.

It localises to the cell membrane. In Vitis vinifera (Grape), this protein is CASP-like protein 1F1.